We begin with the raw amino-acid sequence, 569 residues long: Mitogen-activated protein kinase 8 (569 aa).

The 292-residue stretch at 13 to 304 folds into the Protein kinase domain; that stretch reads YKIQEVIGKG…AEEALADPYF (292 aa). ATP-binding positions include 19 to 27 and K42; that span reads IGKGSYGVV. The active-site Proton acceptor is D139. The residue at position 175 (T175) is a Phosphothreonine. The TXY signature appears at 175–177; sequence TDY. At Y177 the chain carries Phosphotyrosine. The tract at residues 404–432 is disordered; the sequence is TTVHSAPIPPKDHQNITSQVPQRIPGRTG.

This sequence belongs to the protein kinase superfamily. CMGC Ser/Thr protein kinase family. MAP kinase subfamily. Post-translationally, dually phosphorylated on Thr-175 and Tyr-177, which activates the enzyme. In terms of tissue distribution, expressed in leaves and panicles.

The catalysed reaction is L-seryl-[protein] + ATP = O-phospho-L-seryl-[protein] + ADP + H(+). It catalyses the reaction L-threonyl-[protein] + ATP = O-phospho-L-threonyl-[protein] + ADP + H(+). Its activity is regulated as follows. Activated by threonine and tyrosine phosphorylation. This is Mitogen-activated protein kinase 8 (MPK8) from Oryza sativa subsp. japonica (Rice).